The primary structure comprises 206 residues: Putative precorrin-2 dehydrogenase (206 aa).

NAD(+)-binding positions include 20–21 and 41–46; these read SV and KEFDEE.

The protein belongs to the precorrin-2 dehydrogenase / sirohydrochlorin ferrochelatase family. As to quaternary structure, homodimer.

It carries out the reaction precorrin-2 + NAD(+) = sirohydrochlorin + NADH + 2 H(+). It functions in the pathway porphyrin-containing compound metabolism; siroheme biosynthesis; sirohydrochlorin from precorrin-2: step 1/1. Functionally, involved in the archaeal biosynthesis of heme. Catalyzes the oxiation of precorrin-2 into sirohydroclorin. The chain is Putative precorrin-2 dehydrogenase from Methanocaldococcus jannaschii (strain ATCC 43067 / DSM 2661 / JAL-1 / JCM 10045 / NBRC 100440) (Methanococcus jannaschii).